Here is a 276-residue protein sequence, read N- to C-terminus: Large ribosomal subunit protein uL2 (276 aa).

The disordered stretch occupies residues 224-276 (VMNPVDHPHGGGEGKAPIGRKSPMTPWGKPTLGFKTRKKKNKSDKFIIRRRKK). Residues 258–276 (KTRKKKNKSDKFIIRRRKK) show a composition bias toward basic residues.

It belongs to the universal ribosomal protein uL2 family. Part of the 50S ribosomal subunit. Forms a bridge to the 30S subunit in the 70S ribosome.

Functionally, one of the primary rRNA binding proteins. Required for association of the 30S and 50S subunits to form the 70S ribosome, for tRNA binding and peptide bond formation. It has been suggested to have peptidyltransferase activity; this is somewhat controversial. Makes several contacts with the 16S rRNA in the 70S ribosome. The chain is Large ribosomal subunit protein uL2 from Geobacillus sp. (strain WCH70).